We begin with the raw amino-acid sequence, 214 residues long: Superoxide dismutase [Mn/Fe] (214 aa).

Fe(3+) contacts are provided by histidine 31, histidine 79, aspartate 165, and histidine 169. Positions 31, 79, 165, and 169 each coordinate Mn(2+).

It belongs to the iron/manganese superoxide dismutase family. Mn(2+) is required as a cofactor. It depends on Fe(3+) as a cofactor.

The catalysed reaction is 2 superoxide + 2 H(+) = H2O2 + O2. Functionally, destroys superoxide anion radicals which are normally produced within the cells and which are toxic to biological systems. Catalyzes the dismutation of superoxide anion radicals into O2 and H2O2 by successive reduction and oxidation of the transition metal ion at the active site. This Aeropyrum pernix (strain ATCC 700893 / DSM 11879 / JCM 9820 / NBRC 100138 / K1) protein is Superoxide dismutase [Mn/Fe] (sod).